Consider the following 105-residue polypeptide: Putative membrane protein insertion efficiency factor (105 aa).

The protein belongs to the UPF0161 family.

The protein resides in the cell membrane. In terms of biological role, could be involved in insertion of integral membrane proteins into the membrane. This Bifidobacterium longum subsp. infantis (strain ATCC 15697 / DSM 20088 / JCM 1222 / NCTC 11817 / S12) protein is Putative membrane protein insertion efficiency factor.